The chain runs to 293 residues: SAGA-associated factor 29 (293 aa).

The stretch at 3 to 88 (LVSADSRIAE…KALDKIAEIK (86 aa)) forms a coiled coil. Residues 152–293 (GDYVARPGDK…VVACKEPKKK (142 aa)) enclose the SGF29 C-terminal domain. 2 histone H3K4me3 N-terminus binding regions span residues 194-196 (DID) and 240-243 (QTTC). Residues 264-266 (FED) are histone H3K4me3 binding. Residue lysine 288 is modified to N6-acetyllysine.

The protein belongs to the SGF29 family. As to quaternary structure, interacts with dimethylated and trimethylated 'Lys-4' of histone H3 (H3K4me2 and H3K4me3), with a preference for the trimethylated form (H3K4me3). Component of some SAGA-type complexes. Component of the ADA2A-containing complex (ATAC), composed of KAT14, KAT2A, TADA2L, TADA3L, ZZ3, MBIP, WDR5, YEATS2, CCDC101 and DR1. Interacts with (methylated) CGAS. Interacts with TADA3L, GCN5L2, SUPT3H and MYC.

Its subcellular location is the nucleus. In terms of biological role, chromatin reader component of some histone acetyltransferase (HAT) SAGA-type complexes like the TFTC-HAT, ATAC or STAGA complexes. SGF29 specifically recognizes and binds methylated 'Lys-4' of histone H3 (H3K4me), with a preference for trimethylated form (H3K4me3). In the SAGA-type complexes, SGF29 is required to recruit complexes to H3K4me. Involved in the response to endoplasmic reticulum (ER) stress by recruiting the SAGA complex to H3K4me, thereby promoting histone H3 acetylation and cell survival. Also binds non-histone proteins that are methylated on Lys residues: specifically recognizes and binds CGAS monomethylated on 'Lys-506'. This chain is SAGA-associated factor 29, found in Homo sapiens (Human).